A 122-amino-acid chain; its full sequence is uncharacterized protein (122 aa).

This is an uncharacterized protein from Arabidopsis thaliana (Mouse-ear cress).